Reading from the N-terminus, the 293-residue chain is Small ribosomal subunit biogenesis GTPase RsgA (293 aa).

One can recognise a CP-type G domain in the interval 63-223 (KNELVRPPIA…VADTPGFSSL (161 aa)). GTP contacts are provided by residues 112-115 (SKMD) and 166-174 (GQSGVGKSS). Positions 247, 252, 254, and 260 each coordinate Zn(2+).

This sequence belongs to the TRAFAC class YlqF/YawG GTPase family. RsgA subfamily. In terms of assembly, monomer. Associates with 30S ribosomal subunit, binds 16S rRNA. Zn(2+) serves as cofactor.

It localises to the cytoplasm. One of several proteins that assist in the late maturation steps of the functional core of the 30S ribosomal subunit. Helps release RbfA from mature subunits. May play a role in the assembly of ribosomal proteins into the subunit. Circularly permuted GTPase that catalyzes slow GTP hydrolysis, GTPase activity is stimulated by the 30S ribosomal subunit. The sequence is that of Small ribosomal subunit biogenesis GTPase RsgA from Bacillus cytotoxicus (strain DSM 22905 / CIP 110041 / 391-98 / NVH 391-98).